The sequence spans 141 residues: Heavy metal-associated isoprenylated plant protein 29 (141 aa).

Residues 1–59 (MEVPMDCPGCENKVRKALEKMNGVHDVQIDIKQQRVTVTGSAEQKKVLKVARNVTKRDI) form the HMA domain. Residues Cys7 and Cys10 each contribute to the a metal cation site. Cys138 is modified (cysteine methyl ester). Cys138 carries S-farnesyl cysteine lipidation. A propeptide spans 139 to 141 (SIM) (removed in mature form).

It belongs to the HIPP family.

Heavy-metal-binding protein. This is Heavy metal-associated isoprenylated plant protein 29 from Arabidopsis thaliana (Mouse-ear cress).